The following is a 314-amino-acid chain: tRNA-cytidine(32) 2-sulfurtransferase (314 aa).

The PP-loop motif signature appears at 39-44 (SGGKDS). Positions 114, 117, and 205 each coordinate [4Fe-4S] cluster.

This sequence belongs to the TtcA family. Homodimer. Mg(2+) serves as cofactor. Requires [4Fe-4S] cluster as cofactor.

It localises to the cytoplasm. It carries out the reaction cytidine(32) in tRNA + S-sulfanyl-L-cysteinyl-[cysteine desulfurase] + AH2 + ATP = 2-thiocytidine(32) in tRNA + L-cysteinyl-[cysteine desulfurase] + A + AMP + diphosphate + H(+). Its pathway is tRNA modification. Its function is as follows. Catalyzes the ATP-dependent 2-thiolation of cytidine in position 32 of tRNA, to form 2-thiocytidine (s(2)C32). The sulfur atoms are provided by the cysteine/cysteine desulfurase (IscS) system. The protein is tRNA-cytidine(32) 2-sulfurtransferase of Cupriavidus necator (strain ATCC 17699 / DSM 428 / KCTC 22496 / NCIMB 10442 / H16 / Stanier 337) (Ralstonia eutropha).